Reading from the N-terminus, the 362-residue chain is 3-dehydroquinate synthase (362 aa).

NAD(+) is bound by residues 71–76, 105–109, 129–130, lysine 142, lysine 151, and 169–172; these read DGERYK, GVIGD, TT, and CLKT. Zn(2+)-binding residues include glutamate 184, histidine 247, and histidine 264.

The protein belongs to the sugar phosphate cyclases superfamily. Dehydroquinate synthase family. Requires Co(2+) as cofactor. It depends on Zn(2+) as a cofactor. NAD(+) serves as cofactor.

It is found in the cytoplasm. It catalyses the reaction 7-phospho-2-dehydro-3-deoxy-D-arabino-heptonate = 3-dehydroquinate + phosphate. It functions in the pathway metabolic intermediate biosynthesis; chorismate biosynthesis; chorismate from D-erythrose 4-phosphate and phosphoenolpyruvate: step 2/7. In terms of biological role, catalyzes the conversion of 3-deoxy-D-arabino-heptulosonate 7-phosphate (DAHP) to dehydroquinate (DHQ). The chain is 3-dehydroquinate synthase from Salmonella arizonae (strain ATCC BAA-731 / CDC346-86 / RSK2980).